We begin with the raw amino-acid sequence, 517 residues long: PSTB2-interacting protein 1 (517 aa).

Interacts with PDR17/PSTB2 and SCS2.

In terms of biological role, phosphatidic acid-binding protein involved in interorganelle phosphatidylserine (PtdSer) transport. Linkks a PtdSer donor membrane (via binding of SCS2 and phosphatidic acid present in the donor membrane) with an acceptor membrane (via its interaction with PDR17), forming a zone of apposition that facilitates PtdSer transfer. The protein is PSTB2-interacting protein 1 of Saccharomyces cerevisiae (strain ATCC 204508 / S288c) (Baker's yeast).